The sequence spans 479 residues: MSLLIRGATVVTHEESYRADVLCANGLIQAIGENLETPSGCDVLDGGGQYLMPGGIDPHTHMQLPFMGTVASEDFFSGTAAGLAGGTTSIIDFVIPNPRQSLLEAFHTWRGWAQKSAADYGFHVAITWWSDEVAREMGELVAQHGVNSFKHFMAYKNAIMAADDTLVASFERCLELGAVPTVHAENGELVFHLQQKLLAQGLTGPEAHPLSRPPQVEGEAASRAIRIAETLGTPLYLVHISSREALDEIAYARAKGQPVYGEVLAGHLLLDDSVYRHPDWATAAGYVMSPPFRPVEHQEALWRGLQSGNLHTTATDHCCFCAEQKAMGRDDFSKIPNGTAGIEDRMALLWDAGVNSGRLSMHEFVALTSTNTAKIFNLFPRKGAIRVGADADLVLWDPQGSRTLSAATHHQRVDFNIFEGRTVRGIPSHTISQGKLLWAAGDLRAEPGAGRYVERPAYPSVYEVLGRRAERQRPVAVER.

Zn(2+) is bound by residues His59, His61, and Lys150. Lys150 carries the N6-carboxylysine modification. Tyr155 is a binding site for substrate. Positions 183 and 239 each coordinate Zn(2+). Position 289 (Ser289) interacts with substrate. Asp316 is a Zn(2+) binding site. Residue Asn337 participates in substrate binding.

It belongs to the metallo-dependent hydrolases superfamily. Hydantoinase/dihydropyrimidinase family. Homotetramer. The cofactor is Zn(2+). In terms of processing, carboxylation allows a single lysine to coordinate two zinc ions.

It catalyses the reaction 5,6-dihydrouracil + H2O = 3-(carbamoylamino)propanoate + H(+). Its function is as follows. Catalyzes the hydrolysis of dihydropyrimidines and of the structurally related DL-5-mono-substituted hydantoins, to produce N-carbamoyl-D-amino acids. In Pseudomonas aeruginosa (strain ATCC 15692 / DSM 22644 / CIP 104116 / JCM 14847 / LMG 12228 / 1C / PRS 101 / PAO1), this protein is D-hydantoinase/dihydropyrimidinase (dht).